Consider the following 383-residue polypeptide: Succinyl-diaminopimelate desuccinylase (383 aa).

His73 is a binding site for Zn(2+). The active site involves Asp75. Asp107 is a binding site for Zn(2+). Residue Glu141 is the Proton acceptor of the active site. 3 residues coordinate Zn(2+): Glu142, Glu170, and His356.

It belongs to the peptidase M20A family. DapE subfamily. Homodimer. Zn(2+) is required as a cofactor. It depends on Co(2+) as a cofactor.

It carries out the reaction N-succinyl-(2S,6S)-2,6-diaminopimelate + H2O = (2S,6S)-2,6-diaminopimelate + succinate. The protein operates within amino-acid biosynthesis; L-lysine biosynthesis via DAP pathway; LL-2,6-diaminopimelate from (S)-tetrahydrodipicolinate (succinylase route): step 3/3. Functionally, catalyzes the hydrolysis of N-succinyl-L,L-diaminopimelic acid (SDAP), forming succinate and LL-2,6-diaminopimelate (DAP), an intermediate involved in the bacterial biosynthesis of lysine and meso-diaminopimelic acid, an essential component of bacterial cell walls. This chain is Succinyl-diaminopimelate desuccinylase, found in Pseudomonas aeruginosa (strain ATCC 15692 / DSM 22644 / CIP 104116 / JCM 14847 / LMG 12228 / 1C / PRS 101 / PAO1).